Consider the following 204-residue polypeptide: RNA-free ribonuclease P (204 aa).

It belongs to the HARP family.

The enzyme catalyses Endonucleolytic cleavage of RNA, removing 5'-extranucleotides from tRNA precursor.. Functionally, RNA-free RNase P that catalyzes the removal of the 5'-leader sequence from pre-tRNA to produce the mature 5'-terminus. The protein is RNA-free ribonuclease P of Ignicoccus hospitalis (strain KIN4/I / DSM 18386 / JCM 14125).